A 324-amino-acid chain; its full sequence is Acetyl-coenzyme A carboxylase carboxyl transferase subunit alpha (324 aa).

The CoA carboxyltransferase C-terminal domain maps to 44–298 (ILQRKLLNLK…KNKIRDQLDF (255 aa)).

It belongs to the AccA family. As to quaternary structure, acetyl-CoA carboxylase is a heterohexamer composed of biotin carboxyl carrier protein (accB), biotin carboxylase (accC) and two subunits each of ACCase subunit alpha (accA) and ACCase subunit beta (accD).

The protein localises to the plastid. The protein resides in the chloroplast. The catalysed reaction is N(6)-carboxybiotinyl-L-lysyl-[protein] + acetyl-CoA = N(6)-biotinyl-L-lysyl-[protein] + malonyl-CoA. It participates in lipid metabolism; malonyl-CoA biosynthesis; malonyl-CoA from acetyl-CoA: step 1/1. Functionally, component of the acetyl coenzyme A carboxylase (ACC) complex. First, biotin carboxylase catalyzes the carboxylation of biotin on its carrier protein (BCCP) and then the CO(2) group is transferred by the carboxyltransferase to acetyl-CoA to form malonyl-CoA. The chain is Acetyl-coenzyme A carboxylase carboxyl transferase subunit alpha from Cyanidium caldarium (Red alga).